The chain runs to 423 residues: Serine--tRNA ligase (423 aa).

Position 231 to 233 (231 to 233 (TAE)) interacts with L-serine. An ATP-binding site is contributed by 262–264 (RSE). Glu285 contacts L-serine. 349–352 (EISS) is a binding site for ATP. An L-serine-binding site is contributed by Ser384.

It belongs to the class-II aminoacyl-tRNA synthetase family. Type-1 seryl-tRNA synthetase subfamily. As to quaternary structure, homodimer. The tRNA molecule binds across the dimer.

The protein localises to the cytoplasm. The enzyme catalyses tRNA(Ser) + L-serine + ATP = L-seryl-tRNA(Ser) + AMP + diphosphate + H(+). It carries out the reaction tRNA(Sec) + L-serine + ATP = L-seryl-tRNA(Sec) + AMP + diphosphate + H(+). It participates in aminoacyl-tRNA biosynthesis; selenocysteinyl-tRNA(Sec) biosynthesis; L-seryl-tRNA(Sec) from L-serine and tRNA(Sec): step 1/1. Functionally, catalyzes the attachment of serine to tRNA(Ser). Is also able to aminoacylate tRNA(Sec) with serine, to form the misacylated tRNA L-seryl-tRNA(Sec), which will be further converted into selenocysteinyl-tRNA(Sec). The polypeptide is Serine--tRNA ligase (Acinetobacter baylyi (strain ATCC 33305 / BD413 / ADP1)).